Reading from the N-terminus, the 671-residue chain is Oviduct-specific glycoprotein (671 aa).

Residues 1 to 21 (MGRLLLWVGLVLLMKPNDGTA) form the signal peptide. Residues 22–385 (YKLVCYFTNW…HILNELLVRA (364 aa)) form the GH18 domain. Cysteine 26 and cysteine 51 are disulfide-bonded. Residues 71-72 (LQ), 98-101 (GGWN), tyrosine 142, 211-214 (LSYD), and tryptophan 355 contribute to the chitin site. N-linked (GlcNAc...) asparagine glycosylation occurs at asparagine 402. 8 consecutive repeat copies span residues 490-504 (TGMT…AGRE), 505-519 (TMTT…PGGE), 520-534 (TMTT…PGGE), 535-549 (TVTT…PGGE), 550-564 (TMTT…PGGE), 565-579 (TVTI…PVGE), 580-594 (TVTI…PGGQ), and 595-609 (TTAT…PPGM). The interval 490–609 (TGMTVTVQTQ…GSQSVTPPGM (120 aa)) is 8 X 15 AA tandem repeats. 6 N-linked (GlcNAc...) asparagine glycosylation sites follow: asparagine 511, asparagine 526, asparagine 541, asparagine 556, asparagine 571, and asparagine 586.

The protein belongs to the glycosyl hydrolase 18 family. Highly O-glycosylated and also N-glycosylated. Oviduct.

Its subcellular location is the cytoplasmic vesicle. It is found in the secretory vesicle. Its function is as follows. Binds to oocyte zona pellucida in vivo. May play a role in the fertilization process and/or early embryonic development. Might act as a protective secretion influencing the first steps of the reproductive process necessary for the normal triggering of fertilization and early embryonic development. The chain is Oviduct-specific glycoprotein (OVGP1) from Mesocricetus auratus (Golden hamster).